The chain runs to 212 residues: Protein-L-isoaspartate O-methyltransferase (212 aa).

The active site involves serine 60.

It belongs to the methyltransferase superfamily. L-isoaspartyl/D-aspartyl protein methyltransferase family.

The protein localises to the cytoplasm. It catalyses the reaction [protein]-L-isoaspartate + S-adenosyl-L-methionine = [protein]-L-isoaspartate alpha-methyl ester + S-adenosyl-L-homocysteine. Functionally, catalyzes the methyl esterification of L-isoaspartyl residues in peptides and proteins that result from spontaneous decomposition of normal L-aspartyl and L-asparaginyl residues. It plays a role in the repair and/or degradation of damaged proteins. The polypeptide is Protein-L-isoaspartate O-methyltransferase (Pseudomonas putida (strain W619)).